Consider the following 326-residue polypeptide: MAFTPFPPRQPTASARLPLTLMTLDDWALATITGADSEKYMQGQVTADVSQMTENQHLLAAHCDAKGKMWSNLRLFRDGDGFAWIERRSVREPQLTELKKYAVFSKVTIAPDDERVLLGVAGFQARAALANLFSELPSREKQVVKEGATTLLWFEHPAERFLIVTDEATANMLTDKLRGEAELNNSQQWLALNIEAGFPVIDAANSGQFIPQATNLQALGGISFKKGCYTGQEMVARAKFRGANKRALWLLAGSASRLPEAGEDLELKMGENWRRTGTVLAAVKLEDGQVVVQVVMNNDMEPDSIFRVRDDANTLHIEPLPYSLEE.

Residues W27 and W189 each contribute to the folate site.

The protein belongs to the tRNA-modifying YgfZ family.

Its subcellular location is the cytoplasm. Its function is as follows. Folate-binding protein involved in regulating the level of ATP-DnaA and in the modification of some tRNAs. It is probably a key factor in regulatory networks that act via tRNA modification, such as initiation of chromosomal replication. The polypeptide is tRNA-modifying protein YgfZ (Shigella boydii serotype 18 (strain CDC 3083-94 / BS512)).